The chain runs to 75 residues: uncharacterized protein (75 aa).

Residues 49–69 form a helical membrane-spanning segment; the sequence is VDIVAVATTLPFIVAVICIVF.

It is found in the host membrane. This is an uncharacterized protein from Saccharolobus islandicus (Sulfolobus islandicus).